A 658-amino-acid chain; its full sequence is UvrABC system protein B (658 aa).

One can recognise a Helicase ATP-binding domain in the interval 26–414; it reads DGLRRGVKHQ…PGVVEQIIRP (389 aa). 39–46 is a binding site for ATP; it reads GATGTGKT. Residues 92–115 carry the Beta-hairpin motif; that stretch reads YYDYYQPEAYVPQTDTYIEKDAKI. Residues 430–596 enclose the Helicase C-terminal domain; the sequence is QIDDLIGEIR…TVKKEIRDVI (167 aa). Residues 622–657 form the UVR domain; that stretch reads EELIRTLEAEMKEAAKALDFERAAQLRDIIFELKAE.

Belongs to the UvrB family. As to quaternary structure, forms a heterotetramer with UvrA during the search for lesions. Interacts with UvrC in an incision complex.

The protein localises to the cytoplasm. Its function is as follows. The UvrABC repair system catalyzes the recognition and processing of DNA lesions. A damage recognition complex composed of 2 UvrA and 2 UvrB subunits scans DNA for abnormalities. Upon binding of the UvrA(2)B(2) complex to a putative damaged site, the DNA wraps around one UvrB monomer. DNA wrap is dependent on ATP binding by UvrB and probably causes local melting of the DNA helix, facilitating insertion of UvrB beta-hairpin between the DNA strands. Then UvrB probes one DNA strand for the presence of a lesion. If a lesion is found the UvrA subunits dissociate and the UvrB-DNA preincision complex is formed. This complex is subsequently bound by UvrC and the second UvrB is released. If no lesion is found, the DNA wraps around the other UvrB subunit that will check the other stand for damage. The sequence is that of UvrABC system protein B from Geobacillus kaustophilus (strain HTA426).